Here is a 92-residue protein sequence, read N- to C-terminus: Protein S100-A12 (92 aa).

EF-hand domains are found at residues 13–48 and 49–84; these read NIFH…LKNT and KDQG…VLIT. Residue His16 participates in Cu cation binding. Residue His16 participates in Zn(2+) binding. Ca(2+) is bound by residues Ser19 and His24. Position 26 (Asp26) interacts with Cu cation. Position 26 (Asp26) interacts with Zn(2+). Ca(2+) is bound by residues Thr27 and Glu32. The hinge domain stretch occupies residues 38-53; that stretch reads TKELPNTLKNTKDQGT. Ca(2+) contacts are provided by Asp62, Asn64, Asp66, Gln68, and Glu73. Cu cation-binding residues include His86 and His90. Residues His86 and His90 each coordinate Zn(2+).

The protein belongs to the S-100 family. In terms of assembly, homodimer. Homooligomer (tetramer or hexamer) in the presence of calcium, zinc and copper ions. Interacts with AGER and both calcium and zinc are essential for the interaction. Interacts with CACYBP in a calcium-dependent manner. In terms of tissue distribution, found essentially in granulocytes with small amounts found in lymphocytes.

Its subcellular location is the secreted. It localises to the cytoplasm. It is found in the cytoskeleton. The protein localises to the cell membrane. In terms of biological role, S100A12 is a calcium-, zinc- and copper-binding protein which plays a prominent role in the regulation of inflammatory processes and immune response. Its pro-inflammatory activity involves recruitment of leukocytes, promotion of cytokine and chemokine production, and regulation of leukocyte adhesion and migration. Acts as an alarmin or a danger associated molecular pattern (DAMP) molecule and stimulates innate immune cells via binding to receptor for advanced glycation endproducts (AGER). Binding to AGER activates the MAP-kinase and NF-kappa-B signaling pathways leading to production of pro-inflammatory cytokines and up-regulation of cell adhesion molecules ICAM1 and VCAM1. Acts as a monocyte and mast cell chemoattractant. Can stimulate mast cell degranulation and activation which generates chemokines, histamine and cytokines inducing further leukocyte recruitment to the sites of inflammation. Can inhibit the activity of matrix metalloproteinases; MMP2, MMP3 and MMP9 by chelating Zn(2+) from their active sites. The protein is Protein S100-A12 (S100A12) of Sus scrofa (Pig).